The sequence spans 462 residues: L-seryl-tRNA(Sec) selenium transferase (462 aa).

K295 is modified (N6-(pyridoxal phosphate)lysine).

It belongs to the SelA family. As to quaternary structure, homodecamer; pentamer of dimers. Binds only one seryl-tRNA(Sec) per dimer. Requires pyridoxal 5'-phosphate as cofactor.

It is found in the cytoplasm. It catalyses the reaction L-seryl-tRNA(Sec) + selenophosphate + H(+) = L-selenocysteinyl-tRNA(Sec) + phosphate. It participates in aminoacyl-tRNA biosynthesis; selenocysteinyl-tRNA(Sec) biosynthesis; selenocysteinyl-tRNA(Sec) from L-seryl-tRNA(Sec) (bacterial route): step 1/1. Its function is as follows. Converts seryl-tRNA(Sec) to selenocysteinyl-tRNA(Sec) required for selenoprotein biosynthesis. In Klebsiella pneumoniae subsp. pneumoniae (strain ATCC 700721 / MGH 78578), this protein is L-seryl-tRNA(Sec) selenium transferase.